A 202-amino-acid chain; its full sequence is Putative NADH dehydrogenase/NAD(P)H nitroreductase SCO7141 (202 aa).

This sequence belongs to the nitroreductase family. HadB/RutE subfamily. FMN serves as cofactor.

The polypeptide is Putative NADH dehydrogenase/NAD(P)H nitroreductase SCO7141 (Streptomyces coelicolor (strain ATCC BAA-471 / A3(2) / M145)).